Reading from the N-terminus, the 101-residue chain is Small ribosomal subunit protein uS14 (101 aa).

It belongs to the universal ribosomal protein uS14 family. Part of the 30S ribosomal subunit. Contacts proteins S3 and S10.

In terms of biological role, binds 16S rRNA, required for the assembly of 30S particles and may also be responsible for determining the conformation of the 16S rRNA at the A site. This chain is Small ribosomal subunit protein uS14, found in Ruegeria sp. (strain TM1040) (Silicibacter sp.).